Reading from the N-terminus, the 1356-residue chain is Tenascin-R (1356 aa).

The N-terminal stretch at 1 to 31 (MGIEGETVVLKNMLIGVNLILLGSMLKPSEC) is a signal peptide. N55 is a glycosylation site (N-linked (GlcNAc...) asparagine). Residues 127–157 (CASSAQVLQELLSRIEMLEREVSVLRDQCNT) are a coiled coil. An O-linked (Xyl...) (chondroitin sulfate) serine glycan is attached at S176. Residues N180 and N198 are each glycosylated (N-linked (GlcNAc...) asparagine). EGF-like domains are found at residues 188–199 (CICNEGWFGKNC), 204–230 (CPLG…GDDC), and 235–261 (CPTD…GEDC). O-linked (Xyl...) (chondroitin sulfate) serine glycosylation is present at S271. N-linked (GlcNAc...) asparagine glycosylation is present at N278. EGF-like domains are found at residues 281–292 (CLCQEGYAGEDC) and 293–324 (SQRR…PDCS). Cystine bridges form between C297–C307 and C314–C323. O-linked (Xyl...) (chondroitin sulfate) serine glycosylation occurs at S302. Fibronectin type-III domains follow at residues 328 to 419 (PPED…TPQG), 420 to 504 (LQFK…TVID), 505 to 596 (GPTQ…IDAP), 597 to 686 (KNLR…TELD), 687 to 776 (SPRD…FRPI), 777 to 864 (SHLH…TGID), 865 to 953 (PPKN…AMDS), 954 to 1040 (PMDL…TLLD), and 1041 to 1129 (PPAN…GGRV). Residues N391, N469, and N580 are each glycosylated (N-linked (GlcNAc...) asparagine). At S723 the chain carries Phosphoserine. Residues N790, N868, N873, N1034, N1044, and N1259 are each glycosylated (N-linked (GlcNAc...) asparagine). One can recognise a Fibrinogen C-terminal domain in the interval 1127 to 1342 (GRVFSHPQDC…FVEMKMRPYI (216 aa)).

The protein belongs to the tenascin family. Forms oligomers. Interacts with TNC and FN1. Interacts with BCAN and ACAN in a calcium -dependent manner. Interacts with CNTN1, SCN2B, PTPRZ1, and CSPG3. In terms of processing, contains N-linked oligosaccharides, O-linked sialylated structures. Contains O-linked chondroitin sulfate glycosaminoglycans. Contains N-linked oligosaccharides with a sulfated carbohydrate structure type GalNAc-4-SO4 or HNK-1 (SO4-3-GlcUABeta1,3GalBeta1,4GlcNAc). The levels of HNK-1 rise and fall in parallel to those of TNR during postnatal development of the cerebellum. In contrast, levels of GalNAc-4-SO4 are regulated independently from those of TNR, rising late in cerebellar development and continuing into adulthood. Early in postnatal development, GalNAc-4-SO4 is found predominantly on isoform 1, whereas in the adult it is predominantly on isoform 2. Brain-specific. Expressed in oligodendrocytes and small subsets of neurons (mainly interneurons and motoneurons) of the cerebellum, hippocampus and olfactory bulb. Expressed in dorsal root ganglia.

It is found in the secreted. It localises to the extracellular space. The protein localises to the extracellular matrix. Its function is as follows. Neural extracellular matrix (ECM) protein involved in interactions with different cells and matrix components. Theses interactions can influence cellular behavior by either evoking a stable adhesion and differentiation, or repulsion and inhibition of neurite growth. Binding to cell surface gangliosides inhibits RGD-dependent integrin-mediated cell adhesion and results in an inhibition of PTK2/FAK1 (FAK) phosphorylation and cell detachment. Binding to membrane surface sulfatides results in a oligodendrocyte adhesion and differentiation. Interaction with CNTN1 induces a repulsion of neurons and an inhibition of neurite outgrowth. Interacts with SCN2B may play a crucial role in clustering and regulation of activity of sodium channels at nodes of Ranvier. TNR-linked chondroitin sulfate glycosaminoglycans are involved in the interaction with FN1 and mediates inhibition of cell adhesion and neurite outgrowth. The highly regulated addition of sulfated carbohydrate structure may modulate the adhesive properties of TNR over the course of development and during synapse maintenance. The polypeptide is Tenascin-R (Tnr) (Rattus norvegicus (Rat)).